A 172-amino-acid polypeptide reads, in one-letter code: Large ribosomal subunit protein uL10 (172 aa).

Belongs to the universal ribosomal protein uL10 family. In terms of assembly, part of the ribosomal stalk of the 50S ribosomal subunit. The N-terminus interacts with L11 and the large rRNA to form the base of the stalk. The C-terminus forms an elongated spine to which L12 dimers bind in a sequential fashion forming a multimeric L10(L12)X complex.

Forms part of the ribosomal stalk, playing a central role in the interaction of the ribosome with GTP-bound translation factors. This Clostridium tetani (strain Massachusetts / E88) protein is Large ribosomal subunit protein uL10.